Here is a 451-residue protein sequence, read N- to C-terminus: MTSNDTIAAIATPPGRGGIGIVRISGTNLESLARGILGKLPDPRHAGLFSFLDQNSQIIDQGIALYFPSPHSYTGEEVLELQGHGGPAVMNLLLDRCLQLGARLAEPGEFTLRAFLNDKLDLAQAEGVADLIAASTANAARCAVRSLHGEFSSTIHQLVSALIDLRVLVEATLDFPEEEIDFLQSAHAAEQLATIRAKLEQVLVASRQGNLLQEGIKVVLAGQPNVGKSSLLNRLAGDEVAIVTDIPGTTRDTVRQSIEIEGIPLHLIDTAGLRETSDIVEQHGIARTYAAIEQADLVLLLVDSRHGVTEEDRSVLTRLPERLPVLTVHNKIDLSAQPPRLEENTSGPTIYLSAINGEGIELLRAALLKTAGWQANIAGEGAYMARQRHLQALIQAKELLERAAAWLHRADQLEILAEELRLAQQALSSITGEFTSDDLLGEIFSSFCIGK.

Residues R23, E80, and K119 each coordinate (6S)-5-formyl-5,6,7,8-tetrahydrofolate. The TrmE-type G domain occupies 215–372; the sequence is GIKVVLAGQP…LRAALLKTAG (158 aa). Residue N225 coordinates K(+). GTP-binding positions include 225-230, 244-250, and 269-272; these read NVGKSS, TDIPGTT, and DTAG. Residue S229 coordinates Mg(2+). K(+)-binding residues include T244, I246, and T249. Position 250 (T250) interacts with Mg(2+). K451 is a (6S)-5-formyl-5,6,7,8-tetrahydrofolate binding site.

This sequence belongs to the TRAFAC class TrmE-Era-EngA-EngB-Septin-like GTPase superfamily. TrmE GTPase family. As to quaternary structure, homodimer. Heterotetramer of two MnmE and two MnmG subunits. K(+) is required as a cofactor.

It is found in the cytoplasm. In terms of biological role, exhibits a very high intrinsic GTPase hydrolysis rate. Involved in the addition of a carboxymethylaminomethyl (cmnm) group at the wobble position (U34) of certain tRNAs, forming tRNA-cmnm(5)s(2)U34. The chain is tRNA modification GTPase MnmE from Nitrosomonas europaea (strain ATCC 19718 / CIP 103999 / KCTC 2705 / NBRC 14298).